The chain runs to 137 residues: Basic phospholipase A2 homolog APL-K49 (137 aa).

An N-terminal signal peptide occupies residues 1–16 (MRTLWIVALLLVGVEG). 7 disulfides stabilise this stretch: Cys42-Cys131, Cys44-Cys60, Cys59-Cys111, Cys65-Cys137, Cys66-Cys104, Cys73-Cys97, and Cys91-Cys102. Positions 121-133 (KKYKAYFKLKCKK) are important for membrane-damaging activities in eukaryotes and bacteria; heparin-binding.

Belongs to the phospholipase A2 family. Group II subfamily. K49 sub-subfamily. As to quaternary structure, monomer. In terms of tissue distribution, expressed by the venom gland.

The protein localises to the secreted. In terms of biological role, snake venom phospholipase A2 (PLA2) that lacks enzymatic activity. Does not show antibacterial activity. Is myotoxic and displays edema-inducing activities. A model of myotoxic mechanism has been proposed: an apo Lys49-PLA2 is activated by the entrance of a hydrophobic molecule (e.g. fatty acid) at the hydrophobic channel of the protein leading to a reorientation of a monomer. This reorientation causes a transition between 'inactive' to 'active' states, causing alignment of C-terminal and membrane-docking sites (MDoS) side-by-side and putting the membrane-disruption sites (MDiS) in the same plane, exposed to solvent and in a symmetric position for both monomers. The MDoS region stabilizes the toxin on membrane by the interaction of charged residues with phospholipid head groups. Subsequently, the MDiS region destabilizes the membrane with penetration of hydrophobic residues. This insertion causes a disorganization of the membrane, allowing an uncontrolled influx of ions (i.e. calcium and sodium), and eventually triggering irreversible intracellular alterations and cell death. The protein is Basic phospholipase A2 homolog APL-K49 of Agkistrodon piscivorus leucostoma (Western cottonmouth).